Here is a 334-residue protein sequence, read N- to C-terminus: H-2 class I histocompatibility antigen, Q7 alpha chain (334 aa).

Residues 1 to 21 (MALTMLLLLVAAALTLIETRA) form the signal peptide. Residues 22-111 (GQHSLQYFHT…AQSYYNQSKG (90 aa)) are alpha-1. Over 22–310 (GQHSLQYFHT…PPYTVSNMAT (289 aa)) the chain is Extracellular. Residue asparagine 107 is glycosylated (N-linked (GlcNAc...) asparagine). The tract at residues 112-203 (GSHTLQWMYG…QLGKETLLRT (92 aa)) is alpha-2. 2 disulfide bridges follow: cysteine 122/cysteine 185 and cysteine 224/cysteine 280. The segment at 204–295 (DPPKAHVTHH…GLPEPLTLRW (92 aa)) is alpha-3. In terms of domain architecture, Ig-like C1-type spans 206–294 (PKAHVTHHPR…EGLPEPLTLR (89 aa)). A glycan (N-linked (GlcNAc...) asparagine) is linked at asparagine 277. Residues 296–310 (GRWEPPPYTVSNMAT) are connecting peptide. The chain crosses the membrane as a helical span at residues 311–332 (IAVVVDLGAVAIIGAVVAFVMN).

The protein belongs to the MHC class I family. Heterodimer of an alpha chain and a beta chain (beta-2-microglobulin).

The protein localises to the membrane. Involved in the presentation of foreign antigens to the immune system. The sequence is that of H-2 class I histocompatibility antigen, Q7 alpha chain (H2-Q7) from Mus musculus (Mouse).